The sequence spans 297 residues: 4-hydroxy-tetrahydrodipicolinate synthase (297 aa).

Thr45 contributes to the pyruvate binding site. Catalysis depends on Tyr133, which acts as the Proton donor/acceptor. Lys161 serves as the catalytic Schiff-base intermediate with substrate. Ile203 serves as a coordination point for pyruvate.

Belongs to the DapA family. As to quaternary structure, homotetramer; dimer of dimers.

The protein resides in the cytoplasm. The catalysed reaction is L-aspartate 4-semialdehyde + pyruvate = (2S,4S)-4-hydroxy-2,3,4,5-tetrahydrodipicolinate + H2O + H(+). It functions in the pathway amino-acid biosynthesis; L-lysine biosynthesis via DAP pathway; (S)-tetrahydrodipicolinate from L-aspartate: step 3/4. Its function is as follows. Catalyzes the condensation of (S)-aspartate-beta-semialdehyde [(S)-ASA] and pyruvate to 4-hydroxy-tetrahydrodipicolinate (HTPA). The polypeptide is 4-hydroxy-tetrahydrodipicolinate synthase (Buchnera aphidicola subsp. Cinara cedri (strain Cc)).